Consider the following 407-residue polypeptide: Putative metabolite transport protein HI_1104 (407 aa).

The Cytoplasmic segment spans residues 1 to 16; it reads MTNKVNSYGWKALIGS. A helical transmembrane segment spans residues 17–37; the sequence is AVGYGMDGFDLLILGFMLSAI. Topologically, residues 38–48 are periplasmic; the sequence is SADLNLTPAQG. The chain crosses the membrane as a helical span at residues 49 to 69; that stretch reads GSLVTWTLIGAVFGGILFGAL. Residues 70–77 are Cytoplasmic-facing; sequence SDKYGRVR. Residues 78–98 form a helical membrane-spanning segment; that stretch reads VLTWTILLFAVFTGLCAIAQG. The Periplasmic portion of the chain corresponds to 99-107; sequence YWDLLIYRT. The chain crosses the membrane as a helical span at residues 108–128; it reads IAGIGLGGEFGIGMALAAEAW. Topologically, residues 129–138 are cytoplasmic; the sequence is PARHRAKAAS. A helical membrane pass occupies residues 139–159; that stretch reads YVALGWQVGVLGAALLTPLLL. Position 160 (Pro-160) is a topological domain, periplasmic. Residues 161–181 traverse the membrane as a helical segment; the sequence is HIGWRGMFLVGIFPAFVAWFL. The Cytoplasmic portion of the chain corresponds to 182 to 224; the sequence is RSHLHEPEIFTQKQTALSTQSSFTDKLRSFQLLIKDKATSKIS. The helical transmembrane segment at 225–245 threads the bilayer; that stretch reads LGIVVLTSVQNFGYYGIMIWL. Over 246–261 the chain is Periplasmic; sequence PNFLSKQLGFSLTKSG. Residues 262-282 form a helical membrane-spanning segment; that stretch reads LWTAVTVCGMMAGIWIFGQLA. Over 283 to 288 the chain is Cytoplasmic; the sequence is DRIGRK. The helical transmembrane segment at 289–309 threads the bilayer; that stretch reads PSFLLFQLGAVISIVVYSQLT. The Periplasmic segment spans residues 310–312; sequence DPD. A helical membrane pass occupies residues 313–333; that stretch reads IMLLAGAFLGMFVNGMLGGYG. Residues 334 to 357 are Cytoplasmic-facing; that stretch reads ALMAEAYPTEARATAQNVLFNIGR. A run of 2 helical transmembrane segments spans residues 358–378 and 379–399; these read AVGG…SFQT and AIAL…FLIP. The Cytoplasmic segment spans residues 400 to 407; the sequence is ELKGKALD.

It belongs to the major facilitator superfamily. Aromatic acid:H(+) symporter (AAHS) (TC 2.A.1.15) family.

Its subcellular location is the cell inner membrane. The protein is Putative metabolite transport protein HI_1104 of Haemophilus influenzae (strain ATCC 51907 / DSM 11121 / KW20 / Rd).